We begin with the raw amino-acid sequence, 393 residues long: G protein-activated inward rectifier potassium channel 3 (393 aa).

A disordered region spans residues 1 to 23; that stretch reads MAQENAAFSPGSEEPPRRRGRQR. At 1–57 the chain is on the cytoplasmic side; the sequence is MAQENAAFSPGSEEPPRRRGRQRYVEKDGRCNVQQGNVRETYRYLTDLFTTLVDLQW. Residues 58–82 form a helical membrane-spanning segment; that stretch reads RLSLLFFVLAYALTWLFFGAIWWLI. The Extracellular segment spans residues 83-106; the sequence is AYGRGDLEHLEDTAWTPCVNNLNG. The segment at residues 107-118 is an intramembrane region (helical; Pore-forming); that stretch reads FVAAFLFSIETE. Residues 119 to 125 constitute an intramembrane region (pore-forming); that stretch reads TTIGYGH. The Selectivity filter motif lies at 120–125; it reads TIGYGH. Residues 126–134 are Extracellular-facing; the sequence is RVITDQCPE. Residues 135–156 form a helical membrane-spanning segment; the sequence is GIVLLLLQAILGSMVNAFMVGC. The Cytoplasmic segment spans residues 157 to 393; the sequence is MFVKISQPNK…LPPPESESKV (237 aa). The disordered stretch occupies residues 360-393; sequence KVEEEGAGEGAGAGDGADKEHNGCLPPPESESKV. Positions 384-393 are enriched in pro residues; it reads LPPPESESKV. Positions 390–393 match the PDZ-binding motif; sequence ESKV.

Belongs to the inward rectifier-type potassium channel (TC 1.A.2.1) family. KCNJ9 subfamily. Associates with KCNJ3/GIRK1 to form a G-protein-activated heteromultimer pore-forming unit. Interacts (via PDZ-binding motif) with SNX27 (via PDZ domain); the interaction is required when endocytosed to prevent degradation in lysosomes and promote recycling to the plasma membrane. Expressed mainly in the brain, some expression in the skeletal muscle.

The protein resides in the membrane. The enzyme catalyses K(+)(in) = K(+)(out). Inward rectifier potassium channels are characterized by a greater tendency to allow potassium to flow into the cell rather than out of it. Their voltage dependence is regulated by the concentration of extracellular potassium; as external potassium is raised, the voltage range of the channel opening shifts to more positive voltages. The inward rectification is mainly due to the blockage of outward current by internal magnesium. This receptor is controlled by G proteins. Unable to produce channel activity when expressed alone. Forms a functional channel in association with KCNJ3/GIRK1. The polypeptide is G protein-activated inward rectifier potassium channel 3 (Kcnj9) (Mus musculus (Mouse)).